The sequence spans 755 residues: Sentrin-specific protease 5 (755 aa).

The disordered stretch occupies residues 268–321 (VQKVTGDHQETRRENGEGGSCSPFPSPEPKDPSCRHQPYFPDMDSSAVVKGTNS). Positions 272–283 (TGDHQETRRENG) are enriched in basic and acidic residues. The segment at 567-724 (HMLDMDDLAT…VFVLQYCKCL (158 aa)) is protease. Catalysis depends on residues His646, Asp663, and Cys713.

It belongs to the peptidase C48 family. In terms of assembly, interacts with CCAR2.

The protein localises to the nucleus. The protein resides in the nucleolus. Protease that catalyzes two essential functions in the SUMO pathway: processing of full-length SUMO3 to its mature form and deconjugation of SUMO2 and SUMO3 from targeted proteins. Has weak proteolytic activity against full-length SUMO1 or SUMO1 conjugates. Required for cell division. The polypeptide is Sentrin-specific protease 5 (SENP5) (Homo sapiens (Human)).